We begin with the raw amino-acid sequence, 331 residues long: Lipoyl synthase (331 aa).

The interval Met1–Lys20 is disordered. [4Fe-4S] cluster-binding residues include Cys71, Cys76, Cys82, Cys97, Cys101, Cys104, and Ser311. In terms of domain architecture, Radical SAM core spans Cys82 to Ala300.

This sequence belongs to the radical SAM superfamily. Lipoyl synthase family. [4Fe-4S] cluster is required as a cofactor.

It localises to the cytoplasm. The catalysed reaction is [[Fe-S] cluster scaffold protein carrying a second [4Fe-4S](2+) cluster] + N(6)-octanoyl-L-lysyl-[protein] + 2 oxidized [2Fe-2S]-[ferredoxin] + 2 S-adenosyl-L-methionine + 4 H(+) = [[Fe-S] cluster scaffold protein] + N(6)-[(R)-dihydrolipoyl]-L-lysyl-[protein] + 4 Fe(3+) + 2 hydrogen sulfide + 2 5'-deoxyadenosine + 2 L-methionine + 2 reduced [2Fe-2S]-[ferredoxin]. It functions in the pathway protein modification; protein lipoylation via endogenous pathway; protein N(6)-(lipoyl)lysine from octanoyl-[acyl-carrier-protein]: step 2/2. Functionally, catalyzes the radical-mediated insertion of two sulfur atoms into the C-6 and C-8 positions of the octanoyl moiety bound to the lipoyl domains of lipoate-dependent enzymes, thereby converting the octanoylated domains into lipoylated derivatives. The sequence is that of Lipoyl synthase from Janthinobacterium sp. (strain Marseille) (Minibacterium massiliensis).